A 37-amino-acid polypeptide reads, in one-letter code: Large ribosomal subunit protein bL36 (37 aa).

Belongs to the bacterial ribosomal protein bL36 family.

The chain is Large ribosomal subunit protein bL36 from Bacillus pumilus (strain SAFR-032).